We begin with the raw amino-acid sequence, 288 residues long: Fructose-bisphosphate aldolase (288 aa).

Ser-49 contacts D-glyceraldehyde 3-phosphate. The active-site Proton donor is the Asp-84. His-85, Asp-105, Glu-135, and His-177 together coordinate Zn(2+). Gly-178 lines the dihydroxyacetone phosphate pocket. Position 206 (His-206) interacts with Zn(2+). Dihydroxyacetone phosphate is bound by residues 207–209 and 228–231; these read GGS and NINT.

This sequence belongs to the class II fructose-bisphosphate aldolase family. In terms of assembly, homodimer. Requires Zn(2+) as cofactor.

The catalysed reaction is beta-D-fructose 1,6-bisphosphate = D-glyceraldehyde 3-phosphate + dihydroxyacetone phosphate. It participates in carbohydrate degradation; glycolysis; D-glyceraldehyde 3-phosphate and glycerone phosphate from D-glucose: step 4/4. In terms of biological role, catalyzes the aldol condensation of dihydroxyacetone phosphate (DHAP or glycerone-phosphate) with glyceraldehyde 3-phosphate (G3P) to form fructose 1,6-bisphosphate (FBP) in gluconeogenesis and the reverse reaction in glycolysis. This Mycoplasma genitalium (strain ATCC 33530 / DSM 19775 / NCTC 10195 / G37) (Mycoplasmoides genitalium) protein is Fructose-bisphosphate aldolase (fba).